The following is a 114-amino-acid chain: MAEITSAKAMARTVRVSPRKTRLVLDLIRGKKVADAIAILKFTPNKAARVIEKTLNSAIANAENNFGLEKANLVVSETFANEGPTMKRFRPRAKGSASPINKRTTHVTVVVSEK.

It belongs to the universal ribosomal protein uL22 family. Part of the 50S ribosomal subunit.

This protein binds specifically to 23S rRNA; its binding is stimulated by other ribosomal proteins, e.g. L4, L17, and L20. It is important during the early stages of 50S assembly. It makes multiple contacts with different domains of the 23S rRNA in the assembled 50S subunit and ribosome. In terms of biological role, the globular domain of the protein is located near the polypeptide exit tunnel on the outside of the subunit, while an extended beta-hairpin is found that lines the wall of the exit tunnel in the center of the 70S ribosome. The protein is Large ribosomal subunit protein uL22 of Streptococcus pyogenes serotype M5 (strain Manfredo).